Here is a 900-residue protein sequence, read N- to C-terminus: Phosphoenolpyruvate carboxylase (900 aa).

Residues His-140 and Lys-568 contribute to the active site.

It belongs to the PEPCase type 1 family. It depends on Mg(2+) as a cofactor.

The catalysed reaction is oxaloacetate + phosphate = phosphoenolpyruvate + hydrogencarbonate. In terms of biological role, forms oxaloacetate, a four-carbon dicarboxylic acid source for the tricarboxylic acid cycle. The sequence is that of Phosphoenolpyruvate carboxylase from Neisseria meningitidis serogroup C / serotype 2a (strain ATCC 700532 / DSM 15464 / FAM18).